Consider the following 362-residue polypeptide: Putative glutamate--cysteine ligase 2-1 (362 aa).

This sequence belongs to the glutamate--cysteine ligase type 2 family. YbdK subfamily.

It catalyses the reaction L-cysteine + L-glutamate + ATP = gamma-L-glutamyl-L-cysteine + ADP + phosphate + H(+). Its function is as follows. ATP-dependent carboxylate-amine ligase which exhibits weak glutamate--cysteine ligase activity. The protein is Putative glutamate--cysteine ligase 2-1 of Streptomyces avermitilis (strain ATCC 31267 / DSM 46492 / JCM 5070 / NBRC 14893 / NCIMB 12804 / NRRL 8165 / MA-4680).